The following is an 88-amino-acid chain: Phage-like element PBSX protein XkdR (88 aa).

It to B.subtilis YqbR.

In Bacillus subtilis (strain 168), this protein is Phage-like element PBSX protein XkdR (xkdR).